Here is a 248-residue protein sequence, read N- to C-terminus: 5'-nucleotidase SurE (248 aa).

Positions 8, 9, 39, and 91 each coordinate a divalent metal cation.

Belongs to the SurE nucleotidase family. The cofactor is a divalent metal cation.

It is found in the cytoplasm. It catalyses the reaction a ribonucleoside 5'-phosphate + H2O = a ribonucleoside + phosphate. In terms of biological role, nucleotidase that shows phosphatase activity on nucleoside 5'-monophosphates. The polypeptide is 5'-nucleotidase SurE (Neisseria meningitidis serogroup B (strain ATCC BAA-335 / MC58)).